The following is a 169-amino-acid chain: Protein-export protein SecB (169 aa).

Belongs to the SecB family. Homotetramer, a dimer of dimers. One homotetramer interacts with 1 SecA dimer.

Its subcellular location is the cytoplasm. One of the proteins required for the normal export of preproteins out of the cell cytoplasm. It is a molecular chaperone that binds to a subset of precursor proteins, maintaining them in a translocation-competent state. It also specifically binds to its receptor SecA. The protein is Protein-export protein SecB of Mannheimia succiniciproducens (strain KCTC 0769BP / MBEL55E).